A 365-amino-acid chain; its full sequence is Probable caffeine synthase 2 (365 aa).

Tyr19 lines the S-adenosyl-L-homocysteine pocket. Residue Thr26 coordinates caffeine. S-adenosyl-L-homocysteine contacts are provided by Cys62, Asp99, Leu100, Ser134, and Phe135. Residues Tyr152, His155, and Trp156 each contribute to the caffeine site. A Mg(2+)-binding site is contributed by Asn173. Arg221 lines the caffeine pocket. The Mg(2+) site is built by Asp259, Phe261, and Asn262. Phe317 provides a ligand contact to caffeine.

This sequence belongs to the methyltransferase superfamily. Type-7 methyltransferase family. It depends on Mg(2+) as a cofactor.

It catalyses the reaction 7-methylxanthine + S-adenosyl-L-methionine = theobromine + S-adenosyl-L-homocysteine + H(+). The enzyme catalyses theobromine + S-adenosyl-L-methionine = caffeine + S-adenosyl-L-homocysteine + H(+). The catalysed reaction is 1,7-dimethylxanthine + S-adenosyl-L-methionine = caffeine + S-adenosyl-L-homocysteine + H(+). Its pathway is alkaloid biosynthesis. Functionally, may be involved in the biosynthesis of caffeine. Catalyzes the conversion of 7-methylxanthine (7mX) to theobromine and of theobromine to caffeine. Has 1-N-methylation activity. This is Probable caffeine synthase 2 from Camellia sinensis (Tea plant).